A 400-amino-acid polypeptide reads, in one-letter code: Phosphoglycerate kinase (400 aa).

Substrate is bound by residues 20 to 22 (DLN), Arg-35, 58 to 61 (HQGR), Arg-115, and Arg-155. Residues Glu-330 and 356–359 (GGDT) each bind ATP.

Belongs to the phosphoglycerate kinase family. In terms of assembly, monomer.

The protein resides in the cytoplasm. It carries out the reaction (2R)-3-phosphoglycerate + ATP = (2R)-3-phospho-glyceroyl phosphate + ADP. Its pathway is carbohydrate degradation; glycolysis; pyruvate from D-glyceraldehyde 3-phosphate: step 2/5. The polypeptide is Phosphoglycerate kinase (Haloarcula marismortui (strain ATCC 43049 / DSM 3752 / JCM 8966 / VKM B-1809) (Halobacterium marismortui)).